Here is a 347-residue protein sequence, read N- to C-terminus: MSGLVCYCRQGFEPELAAELSARAAFVGIAGYARTQRNDGYVLFVCDEAAQLAAKLQWRELIFARQKLVVIAELKGIDPKDRITPILAALDGHQRFGDLWVEHPDSDAGKPLAGLARSFGNALRPALRKAGLLTDKPQLRQPRLHVCFLDGDHAVLAVADNADSAPWPLGIPRLKLLPEAPSRSALKLDEALLTLLTPEERDALVKPGMRAADLGAAPGGWTWVLTRQHVHVTSVDNGPLREHVLETGLVEHLRADGFHWKPAQPLDWMVCDMVEQPRRVAERMATWVREGWCRNTIFNLKLPMKKRWDETRLCLDLFEQQAEKSLIVRAKQLYHDREEITVLAMRE.

S-adenosyl-L-methionine-binding positions include serine 184, 217-220, aspartate 236, aspartate 256, and aspartate 272; that span reads APGG. Lysine 301 functions as the Proton acceptor in the catalytic mechanism.

This sequence belongs to the class I-like SAM-binding methyltransferase superfamily. RNA methyltransferase RlmE family. RlmM subfamily. Monomer.

It is found in the cytoplasm. It catalyses the reaction cytidine(2498) in 23S rRNA + S-adenosyl-L-methionine = 2'-O-methylcytidine(2498) in 23S rRNA + S-adenosyl-L-homocysteine + H(+). Catalyzes the 2'-O-methylation at nucleotide C2498 in 23S rRNA. The protein is Ribosomal RNA large subunit methyltransferase M of Xanthomonas euvesicatoria pv. vesicatoria (strain 85-10) (Xanthomonas campestris pv. vesicatoria).